The sequence spans 238 residues: Probable 2-phosphosulfolactate phosphatase (238 aa).

Belongs to the ComB family. Mg(2+) serves as cofactor.

The catalysed reaction is (2R)-O-phospho-3-sulfolactate + H2O = (2R)-3-sulfolactate + phosphate. In Clostridium botulinum (strain Alaska E43 / Type E3), this protein is Probable 2-phosphosulfolactate phosphatase.